The chain runs to 330 residues: Ubiquinone biosynthesis protein COQ4, mitochondrial (330 aa).

A mitochondrion-targeting transit peptide spans 1–31; it reads MLQSTKVTKSVLTNVLRVEQRRGFLLSGAAV. Positions 212, 213, 216, and 228 each coordinate Zn(2+).

The protein belongs to the COQ4 family. In terms of assembly, component of a multi-subunit COQ enzyme complex, composed of at least COQ3, COQ4, COQ5, COQ6, COQ7 and COQ9. It depends on Zn(2+) as a cofactor.

The protein localises to the mitochondrion inner membrane. The catalysed reaction is a 4-hydroxy-3-methoxy-5-(all-trans-polyprenyl)benzoate + H(+) = a 2-methoxy-6-(all-trans-polyprenyl)phenol + CO2. The protein operates within cofactor biosynthesis; ubiquinone biosynthesis. Lyase that catalyzes the C1-decarboxylation of 4-hydroxy-3-methoxy-5-(all-trans-polyprenyl)benzoic acid into 2-methoxy-6-(all-trans-polyprenyl)phenol during ubiquinone biosynthesis. In Candida glabrata (strain ATCC 2001 / BCRC 20586 / JCM 3761 / NBRC 0622 / NRRL Y-65 / CBS 138) (Yeast), this protein is Ubiquinone biosynthesis protein COQ4, mitochondrial.